The sequence spans 289 residues: RNA exonuclease 4 (289 aa).

Residues 1–24 (MALSSNWQALLASESNPTSNGKNK) show a composition bias toward polar residues. A disordered region spans residues 1–34 (MALSSNWQALLASESNPTSNGKNKQSNRKIRNVK). Positions 25–34 (QSNRKIRNVK) are enriched in basic residues. Residues 121–273 (YIAMDCEFVG…EDARATMLLY (153 aa)) enclose the Exonuclease domain.

Belongs to the REXO4 family.

It is found in the nucleus. Functionally, exoribonuclease involved in ribosome biosynthesis. Involved in the processing of ITS1, the internal transcribed spacer localized between the 18S and 5.8S rRNAs. The chain is RNA exonuclease 4 (REX4) from Saccharomyces cerevisiae (strain ATCC 204508 / S288c) (Baker's yeast).